The chain runs to 188 residues: Peptidyl-tRNA hydrolase (188 aa).

Phe14 lines the tRNA pocket. The active-site Proton acceptor is the His19. TRNA-binding residues include Tyr64, Asn66, and Asn112.

This sequence belongs to the PTH family. Monomer.

Its subcellular location is the cytoplasm. It catalyses the reaction an N-acyl-L-alpha-aminoacyl-tRNA + H2O = an N-acyl-L-amino acid + a tRNA + H(+). Hydrolyzes ribosome-free peptidyl-tRNAs (with 1 or more amino acids incorporated), which drop off the ribosome during protein synthesis, or as a result of ribosome stalling. In terms of biological role, catalyzes the release of premature peptidyl moieties from peptidyl-tRNA molecules trapped in stalled 50S ribosomal subunits, and thus maintains levels of free tRNAs and 50S ribosomes. The protein is Peptidyl-tRNA hydrolase of Aster yellows witches'-broom phytoplasma (strain AYWB).